The sequence spans 764 residues: Putative wall-associated receptor kinase-like 13 (764 aa).

Residues 1-26 form the signal peptide; sequence MRGNKNYYFLSLLYFLSLPILHFSSC. The Extracellular portion of the chain corresponds to 27 to 379; it reads THKCGDIQIP…HRCIDYHIPE (353 aa). N-linked (GlcNAc...) asparagine glycosylation is found at Asn78, Asn114, Asn121, Asn164, Asn233, Asn238, Asn259, and Asn283. The interval 308–372 is atypical EGF-like; sequence CTCDNHIASG…CINTSGGHRC (65 aa). 3 cysteine pairs are disulfide-bonded: Cys310–Cys323, Cys345–Cys363, and Cys352–Cys372. N-linked (GlcNAc...) asparagine glycosylation is present at Asn365. The helical transmembrane segment at 380-400 threads the bilayer; it reads VMLGLGAGFFVLIVGGGIWWW. Residues 401-764 are Cytoplasmic-facing; sequence RKLLRKRRMT…SGSTEIARSM (364 aa). One can recognise a Protein kinase domain in the interval 454–728; it reads FNDNRVIGQG…REVSTALERI (275 aa). ATP-binding positions include 460 to 468 and Lys482; that span reads IGQGGQGTV. Position 527 is a phosphotyrosine (Tyr527). Residue Asp579 is the Proton acceptor of the active site. Phosphothreonine occurs at positions 613 and 618. Tyr626 is modified (phosphotyrosine).

It belongs to the protein kinase superfamily. Ser/Thr protein kinase family.

It is found in the membrane. The catalysed reaction is L-seryl-[protein] + ATP = O-phospho-L-seryl-[protein] + ADP + H(+). It catalyses the reaction L-threonyl-[protein] + ATP = O-phospho-L-threonyl-[protein] + ADP + H(+). Putative serine/threonine-protein kinase that may function as a signaling receptor of extracellular matrix component. The sequence is that of Putative wall-associated receptor kinase-like 13 (WAKL13) from Arabidopsis thaliana (Mouse-ear cress).